Here is a 25-residue protein sequence, read N- to C-terminus: GLFSVLGAVAKHVLPHVVPVIAEKL.

Leucine 25 carries the post-translational modification Leucine amide.

Belongs to the frog skin active peptide (FSAP) family. Caerin subfamily. In terms of tissue distribution, expressed by the skin dorsal glands.

Its subcellular location is the secreted. Its function is as follows. Antimicrobial peptide. Adopts an alpha helical conformation which can disrupt bacterial membranes. Strongly inhibits the formation of NO by neuronal nitric oxide synthase (nNOS) at micromolar concentrations. Acts by a non-competitive mechanism, probably by binding to calcium/calmodulin and as a consequence blocking calmodulin attachment to nNOS. In terms of biological role, does not show antimicrobial activity. This is Caerin-1.6 from Ranoidea chloris (Red-eyed tree frog).